The following is a 950-amino-acid chain: Glycine dehydrogenase (decarboxylating) (950 aa).

The residue at position 698 (Lys-698) is an N6-(pyridoxal phosphate)lysine.

The protein belongs to the GcvP family. In terms of assembly, the glycine cleavage system is composed of four proteins: P, T, L and H. The cofactor is pyridoxal 5'-phosphate.

It carries out the reaction N(6)-[(R)-lipoyl]-L-lysyl-[glycine-cleavage complex H protein] + glycine + H(+) = N(6)-[(R)-S(8)-aminomethyldihydrolipoyl]-L-lysyl-[glycine-cleavage complex H protein] + CO2. The glycine cleavage system catalyzes the degradation of glycine. The P protein binds the alpha-amino group of glycine through its pyridoxal phosphate cofactor; CO(2) is released and the remaining methylamine moiety is then transferred to the lipoamide cofactor of the H protein. This Neisseria gonorrhoeae (strain ATCC 700825 / FA 1090) protein is Glycine dehydrogenase (decarboxylating).